The following is a 323-amino-acid chain: tRNA U34 carboxymethyltransferase (323 aa).

Residues Lys91, Trp105, Lys110, Gly130, 152–154 (DPS), 181–182 (IE), Met196, Tyr200, and Arg315 each bind carboxy-S-adenosyl-L-methionine.

Belongs to the class I-like SAM-binding methyltransferase superfamily. CmoB family. Homotetramer.

It carries out the reaction carboxy-S-adenosyl-L-methionine + 5-hydroxyuridine(34) in tRNA = 5-carboxymethoxyuridine(34) in tRNA + S-adenosyl-L-homocysteine + H(+). Its function is as follows. Catalyzes carboxymethyl transfer from carboxy-S-adenosyl-L-methionine (Cx-SAM) to 5-hydroxyuridine (ho5U) to form 5-carboxymethoxyuridine (cmo5U) at position 34 in tRNAs. This is tRNA U34 carboxymethyltransferase from Vibrio parahaemolyticus serotype O3:K6 (strain RIMD 2210633).